The sequence spans 340 residues: Ferredoxin--NADP reductase (340 aa).

Residues Thr-20, Asp-39, Gln-47, Tyr-52, Val-92, Phe-126, Asp-293, and Thr-334 each contribute to the FAD site.

This sequence belongs to the ferredoxin--NADP reductase type 2 family. Homodimer. It depends on FAD as a cofactor.

The catalysed reaction is 2 reduced [2Fe-2S]-[ferredoxin] + NADP(+) + H(+) = 2 oxidized [2Fe-2S]-[ferredoxin] + NADPH. The polypeptide is Ferredoxin--NADP reductase (Gluconobacter oxydans (strain 621H) (Gluconobacter suboxydans)).